The sequence spans 463 residues: ATP synthase subunit beta 1 (463 aa).

152–159 is an ATP binding site; the sequence is GGAGVGKT.

Belongs to the ATPase alpha/beta chains family. In terms of assembly, F-type ATPases have 2 components, CF(1) - the catalytic core - and CF(0) - the membrane proton channel. CF(1) has five subunits: alpha(3), beta(3), gamma(1), delta(1), epsilon(1). CF(0) has three main subunits: a(1), b(2) and c(9-12). The alpha and beta chains form an alternating ring which encloses part of the gamma chain. CF(1) is attached to CF(0) by a central stalk formed by the gamma and epsilon chains, while a peripheral stalk is formed by the delta and b chains.

The protein localises to the cell inner membrane. The catalysed reaction is ATP + H2O + 4 H(+)(in) = ADP + phosphate + 5 H(+)(out). In terms of biological role, produces ATP from ADP in the presence of a proton gradient across the membrane. The catalytic sites are hosted primarily by the beta subunits. In Shewanella frigidimarina (strain NCIMB 400), this protein is ATP synthase subunit beta 1.